The primary structure comprises 762 residues: Polyribonucleotide nucleotidyltransferase (762 aa).

Residues D531 and D537 each contribute to the Mg(2+) site. The KH domain maps to 597-656 (PRVTTIKVPVDKIGEVIGPKGKVINSITEETGAQISIEDDGTVFVGATDGPSAQAAIDKI). An S1 motif domain is found at 668-737 (GERFLGTVVK…KRGKISLVLV (70 aa)).

The protein belongs to the polyribonucleotide nucleotidyltransferase family. Requires Mg(2+) as cofactor.

The protein localises to the cytoplasm. It carries out the reaction RNA(n+1) + phosphate = RNA(n) + a ribonucleoside 5'-diphosphate. In terms of biological role, involved in mRNA degradation. Catalyzes the phosphorolysis of single-stranded polyribonucleotides processively in the 3'- to 5'-direction. This is Polyribonucleotide nucleotidyltransferase from Mycobacterium marinum (strain ATCC BAA-535 / M).